Reading from the N-terminus, the 439-residue chain is tRNA modification GTPase MnmE (439 aa).

Arg-24, Glu-81, and Lys-121 together coordinate (6S)-5-formyl-5,6,7,8-tetrahydrofolate. The TrmE-type G domain maps to 218 to 363 (GFKVVIAGAP…LRDLIGRVVK (146 aa)). Residue Asn-228 participates in K(+) binding. Residues 228–233 (NAGKSS), 247–253 (TDIAGTT), and 272–275 (DTAG) each bind GTP. Ser-232 lines the Mg(2+) pocket. Positions 247, 249, and 252 each coordinate K(+). Thr-253 is a Mg(2+) binding site. Position 439 (Lys-439) interacts with (6S)-5-formyl-5,6,7,8-tetrahydrofolate.

The protein belongs to the TRAFAC class TrmE-Era-EngA-EngB-Septin-like GTPase superfamily. TrmE GTPase family. Homodimer. Heterotetramer of two MnmE and two MnmG subunits. K(+) is required as a cofactor.

The protein localises to the cytoplasm. In terms of biological role, exhibits a very high intrinsic GTPase hydrolysis rate. Involved in the addition of a carboxymethylaminomethyl (cmnm) group at the wobble position (U34) of certain tRNAs, forming tRNA-cmnm(5)s(2)U34. In Rhizobium etli (strain CIAT 652), this protein is tRNA modification GTPase MnmE.